The following is a 97-amino-acid chain: MIKLNLSNLQHFAHKKGGGSTSNGRDSQAKRLGAKAADGQTVSGGSILYRQRGTHIYPGVNVGRGGDDTLFAKVEGVVRFERKGRDKKQVSVYPIAK.

Residues 1–12 constitute a propeptide that is removed on maturation; sequence MIKLNLSNLQHF. Residues 13 to 38 are disordered; that stretch reads AHKKGGGSTSNGRDSQAKRLGAKAAD.

Belongs to the bacterial ribosomal protein bL27 family. Post-translationally, the N-terminus is cleaved by ribosomal processing cysteine protease Prp.

The polypeptide is Large ribosomal subunit protein bL27 (Streptococcus equi subsp. equi (strain 4047)).